A 263-amino-acid chain; its full sequence is 3-oxo-5-alpha-steroid 4-dehydrogenase 1 (263 aa).

Helical transmembrane passes span 16–33 (MLAA…AVLA), 90–110 (ILLA…PFLM), 115–135 (PMPL…GYLQ), 155–175 (FLIG…SDHI), and 213–233 (YALA…FCFL).

The protein belongs to the steroid 5-alpha reductase family.

Its subcellular location is the microsome membrane. It localises to the endoplasmic reticulum membrane. It catalyses the reaction a 3-oxo-5alpha-steroid + NADP(+) = a 3-oxo-Delta(4)-steroid + NADPH + H(+). It carries out the reaction 5alpha-pregnane-3,20-dione + NADP(+) = progesterone + NADPH + H(+). The catalysed reaction is 17beta-hydroxy-5alpha-androstan-3-one + NADP(+) = testosterone + NADPH + H(+). The enzyme catalyses androst-4-ene-3,17-dione + NADPH + H(+) = 5alpha-androstan-3,17-dione + NADP(+). In terms of biological role, converts testosterone into 5-alpha-dihydrotestosterone and progesterone or corticosterone into their corresponding 5-alpha-3-oxosteroids. It plays a central role in sexual differentiation and androgen physiology. The chain is 3-oxo-5-alpha-steroid 4-dehydrogenase 1 (SRD5A1) from Macaca fascicularis (Crab-eating macaque).